The chain runs to 628 residues: Phosphomethylpyrimidine synthase (628 aa).

The segment covering 1–14 (MTISDIGSQATTHT) has biased composition (polar residues). The interval 1 to 37 (MTISDIGSQATTHTPVKASKADALKTPAHRSETDARF) is disordered. Basic and acidic residues predominate over residues 19–37 (SKADALKTPAHRSETDARF). Residues asparagine 260, methionine 289, tyrosine 318, histidine 354, 374–376 (SRG), 415–418 (DGLR), and glutamate 454 contribute to the substrate site. Position 458 (histidine 458) interacts with Zn(2+). Tyrosine 481 is a substrate binding site. Histidine 522 contacts Zn(2+). [4Fe-4S] cluster contacts are provided by cysteine 602, cysteine 605, and cysteine 610.

The protein belongs to the ThiC family. Homodimer. Requires [4Fe-4S] cluster as cofactor.

It catalyses the reaction 5-amino-1-(5-phospho-beta-D-ribosyl)imidazole + S-adenosyl-L-methionine = 4-amino-2-methyl-5-(phosphooxymethyl)pyrimidine + CO + 5'-deoxyadenosine + formate + L-methionine + 3 H(+). The protein operates within cofactor biosynthesis; thiamine diphosphate biosynthesis. Functionally, catalyzes the synthesis of the hydroxymethylpyrimidine phosphate (HMP-P) moiety of thiamine from aminoimidazole ribotide (AIR) in a radical S-adenosyl-L-methionine (SAM)-dependent reaction. The protein is Phosphomethylpyrimidine synthase of Psychrobacter cryohalolentis (strain ATCC BAA-1226 / DSM 17306 / VKM B-2378 / K5).